Reading from the N-terminus, the 213-residue chain is Thymidylate kinase (213 aa).

10-17 (GLEGAGKT) is a binding site for ATP.

Belongs to the thymidylate kinase family.

The catalysed reaction is dTMP + ATP = dTDP + ADP. Phosphorylation of dTMP to form dTDP in both de novo and salvage pathways of dTTP synthesis. The polypeptide is Thymidylate kinase (Salmonella dublin (strain CT_02021853)).